The chain runs to 287 residues: Protein TMEPAI (287 aa).

Residues 1-40 (MHRLMGVNSTAAAAAGQPNVSCTCNCKRSLFQSMEITELE) lie on the Lumenal side of the membrane. The helical transmembrane segment at 41-63 (FVQIIIIVVVMMVMVVVITCLLS) threads the bilayer. The Cytoplasmic segment spans residues 64 to 287 (HYKLSARSFI…EKDKQKGHPL (224 aa)). The PPxY motif 1 signature appears at 158–161 (PPPY). The short motif at 186-189 (PPNR) is the SMAD interaction motif (SIM) element. The PPxY motif 2 signature appears at 229–232 (PPTY). The interval 239–258 (YPGSSFQHQQSSGPPSLLEG) is disordered. The segment covering 242–252 (SSFQHQQSSGP) has biased composition (polar residues).

Belongs to the PMEPA1 family. In terms of assembly, interacts with NEDD4 (via PPxY motifs). Interacts with AR. Interacts with LDLRAD4. Interacts (via the SMAD interaction motif) with SMAD2 and SMAD3. In terms of tissue distribution, highest expression in prostate. Also expressed in ovary.

The protein localises to the early endosome membrane. It localises to the golgi apparatus membrane. Functionally, functions as a negative regulator of TGF-beta signaling and thereby probably plays a role in cell proliferation, differentiation, apoptosis, motility, extracellular matrix production and immunosuppression. In the canonical TGF-beta pathway, ZFYVE9/SARA recruits the intracellular signal transducer and transcriptional modulators SMAD2 and SMAD3 to the TGF-beta receptor. Phosphorylated by the receptor, SMAD2 and SMAD3 then form a heteromeric complex with SMAD4 that translocates to the nucleus to regulate transcription. Through interaction with SMAD2 and SMAD3, LDLRAD4 may compete with ZFYVE9 and SMAD4 and prevent propagation of the intracellular signal. Also involved in down-regulation of the androgen receptor (AR), enhancing ubiquitination and proteasome-mediated degradation of AR, probably by recruiting NEDD4. This chain is Protein TMEPAI (PMEPA1), found in Homo sapiens (Human).